A 561-amino-acid chain; its full sequence is Carboxylesterase 1F (561 aa).

The first 17 residues, 1–17, serve as a signal peptide directing secretion; that stretch reads MFLSTLFLVSLATCVIC. Cys-87 and Cys-116 form a disulfide bridge. Residue Ser-221 is the Acyl-ester intermediate of the active site. Cys-273 and Cys-284 are oxidised to a cystine. Catalysis depends on charge relay system residues Glu-353 and His-466. Residues 558 to 561 carry the Prevents secretion from ER motif; sequence HNEL.

The protein belongs to the type-B carboxylesterase/lipase family. In terms of tissue distribution, expressed in liver, white and brown adipose tissue, kidney, intestine, adrenal, heart and ovary. Not detected in muscle, lung, testis, brain and spleen.

The protein resides in the lipid droplet. The protein localises to the cytoplasm. It localises to the cytosol. Its subcellular location is the endoplasmic reticulum. It is found in the microsome. It catalyses the reaction a carboxylic ester + H2O = an alcohol + a carboxylate + H(+). It carries out the reaction all-trans-retinyl hexadecanoate + H2O = all-trans-retinol + hexadecanoate + H(+). In terms of biological role, involved in the detoxification of xenobiotics and in the activation of ester and amide prodrugs. Hydrolyzes retinyl esters. Hydrolyzes p-nitrophenyl butyrate (PNPB), triacylglycerol and monoacylglycerol. Shows higher activity against PNPB, a short-chain fatty acid ester, than against triolein, a long-chain fatty acid ester. Shows no detectable activity against diacylglycerol, cholesterol ester or phospholipids. May play a role in adipocyte lipolysis. This chain is Carboxylesterase 1F, found in Mus musculus (Mouse).